We begin with the raw amino-acid sequence, 200 residues long: Oligoribonuclease (200 aa).

The 164-residue stretch at 20 to 183 (LVWLDMEMTG…ADIHESIDEL (164 aa)) folds into the Exonuclease domain. Residue Tyr141 is part of the active site.

Belongs to the oligoribonuclease family.

The protein resides in the cytoplasm. Its function is as follows. 3'-to-5' exoribonuclease specific for small oligoribonucleotides. In Burkholderia vietnamiensis (strain G4 / LMG 22486) (Burkholderia cepacia (strain R1808)), this protein is Oligoribonuclease.